Consider the following 197-residue polypeptide: Holliday junction branch migration complex subunit RuvA (197 aa).

The interval 1-63 is domain I; it reads MFEYLNGKLV…EDAHSLYGFV (63 aa). Residues 64–142 form a domain II region; that stretch reads NEAEKALFLR…ATGTVGISLL (79 aa). The interval 142–146 is flexible linker; sequence LDAGP. The tract at residues 147-197 is domain III; that stretch reads AGNLALEEAIEALQALGYKATELKKIEKKLAQETGLTSEEYIKSALKLMMK.

The protein belongs to the RuvA family. In terms of assembly, homotetramer. Forms an RuvA(8)-RuvB(12)-Holliday junction (HJ) complex. HJ DNA is sandwiched between 2 RuvA tetramers; dsDNA enters through RuvA and exits via RuvB. An RuvB hexamer assembles on each DNA strand where it exits the tetramer. Each RuvB hexamer is contacted by two RuvA subunits (via domain III) on 2 adjacent RuvB subunits; this complex drives branch migration. In the full resolvosome a probable DNA-RuvA(4)-RuvB(12)-RuvC(2) complex forms which resolves the HJ.

Its subcellular location is the cytoplasm. In terms of biological role, the RuvA-RuvB-RuvC complex processes Holliday junction (HJ) DNA during genetic recombination and DNA repair, while the RuvA-RuvB complex plays an important role in the rescue of blocked DNA replication forks via replication fork reversal (RFR). RuvA specifically binds to HJ cruciform DNA, conferring on it an open structure. The RuvB hexamer acts as an ATP-dependent pump, pulling dsDNA into and through the RuvAB complex. HJ branch migration allows RuvC to scan DNA until it finds its consensus sequence, where it cleaves and resolves the cruciform DNA. This chain is Holliday junction branch migration complex subunit RuvA, found in Lactococcus lactis subsp. lactis (strain IL1403) (Streptococcus lactis).